A 272-amino-acid polypeptide reads, in one-letter code: CD40 ligand (272 aa).

The Cytoplasmic segment spans residues Met1–Met23. The chain crosses the membrane as a helical; Signal-anchor for type II membrane protein span at residues Phe24 to Leu44. Topologically, residues Tyr45–Leu272 are extracellular. 2 N-linked (GlcNAc...) asparagine glycosylation sites follow: Asn124 and Asn146. The THD domain maps to Ile136 to Leu272. A disulfide bond links Cys190 and Cys229. Asn251 carries N-linked (GlcNAc...) asparagine glycosylation.

Belongs to the tumor necrosis factor family. Homotrimer. Interacts with CD28. CD40 ligand, soluble form: Exists as either a monomer or a homotrimer. Forms a ternary complex between CD40 and integrins for CD40-CD40LG signaling. In terms of processing, the soluble form derives from the membrane form by proteolytic processing.

It is found in the cell membrane. It localises to the cell surface. The protein resides in the secreted. Functionally, cytokine that acts as a ligand to CD40/TNFRSF5. Costimulates T-cell proliferation and cytokine production. Induces the activation of NF-kappa-B. Mediates B-cell proliferation in the absence of co-stimulus as well as IgE production in the presence of IL4. Involved in immunoglobulin class switching. Its function is as follows. Acts as a ligand for integrins, specifically ITGA5:ITGB1 and ITGAV:ITGB3; both integrins and the CD40 receptor are required for activation of CD40-CD40LG signaling, which have cell-type dependent effects, such as B-cell activation, NF-kappa-B signaling and anti-apoptotic signaling. The polypeptide is CD40 ligand (CD40LG) (Gallus gallus (Chicken)).